Reading from the N-terminus, the 133-residue chain is Small ribosomal subunit protein uS11 (133 aa).

The protein belongs to the universal ribosomal protein uS11 family. In terms of assembly, part of the 30S ribosomal subunit. Interacts with proteins S7 and S18. Binds to IF-3.

Located on the platform of the 30S subunit, it bridges several disparate RNA helices of the 16S rRNA. Forms part of the Shine-Dalgarno cleft in the 70S ribosome. This Bordetella petrii (strain ATCC BAA-461 / DSM 12804 / CCUG 43448) protein is Small ribosomal subunit protein uS11.